Here is a 481-residue protein sequence, read N- to C-terminus: ATP synthase subunit beta, chloroplastic (481 aa).

161–168 (GGAGVGKT) provides a ligand contact to ATP.

Belongs to the ATPase alpha/beta chains family. As to quaternary structure, F-type ATPases have 2 components, CF(1) - the catalytic core - and CF(0) - the membrane proton channel. CF(1) has five subunits: alpha(3), beta(3), gamma(1), delta(1), epsilon(1). CF(0) has four main subunits: a(1), b(1), b'(1) and c(9-12).

The protein localises to the plastid. It is found in the chloroplast thylakoid membrane. The enzyme catalyses ATP + H2O + 4 H(+)(in) = ADP + phosphate + 5 H(+)(out). Functionally, produces ATP from ADP in the presence of a proton gradient across the membrane. The catalytic sites are hosted primarily by the beta subunits. This Dictyota dichotoma protein is ATP synthase subunit beta, chloroplastic.